A 75-amino-acid chain; its full sequence is Dermaseptin-related peptide (75 aa).

An N-terminal signal peptide occupies residues 1-22 (MAFLNKSLLLVLFLGLVSLSIC). Residues 23–43 (EEERRENEDEEEQEDDEQSEM) constitute a propeptide that is removed on maturation. Positions 24 to 44 (EERRENEDEEEQEDDEQSEMR) are disordered. Residues 30 to 40 (EDEEEQEDDEQ) show a composition bias toward acidic residues. A Glutamine amide modification is found at Gln-72. Residues 74–75 (EQ) constitute a propeptide that is removed on maturation.

Expressed by the skin glands.

Its subcellular location is the secreted. In terms of biological role, has antibacterial activity against Gram-positive bacterium M.luteus NCT C2665 but not against Gram-negative bacterium E.coli K12D31. This is Dermaseptin-related peptide from Agalychnis callidryas (Red-eyed tree frog).